Here is a 723-residue protein sequence, read N- to C-terminus: MQNSEGGADSPASVALRPSAAAPPVPASPQRVLVQAASSAPKGAQMQPVSLPRVQQVPQQVQPAQHVYPAQVQYVEGGDAVYTNGAIRTAYTYNPEPQMYAPSSAASYFEAPGGAQVTVAASSPPAVPSHSMVGITMDVGGSPIVSSTGAYLIHGGMDSTRHSLAHTSRSSPATLEMAIENLQKSEGITSHKSGLLNSHLQWLLDNYETAEGVSLPRSSLYNHYLRHCQEHKLDPVNAASFGKLIRSVFMGLRTRRLGTRGNSKYHYYGIRLKPDSPLNRLQEDTQYMAMRQQPMHQKPRYRPAQKTDSLGDSGSHSSLHSTPEQTMAAQSQHHQQYIDVSHVFPEFPAPDLGSVLLQDGVTLHDVKALQLVYRRHCEATVDVVMNLQFHYIEKLWLSFWNSKASSSDGPTSLPASDEDPEGAVLPKDKLISLCQCDPILRWMRSCDHILYQALVEILIPDVLRPVPSTLTQAIRNFAKSLEGWLTNAMSDFPQQVIQTKVGVVSAFAQTLRRYTSLNHLAQAARAVLQNTSQINQMLSDLNRVDFANVQEQASWVCQCEESVVQRLEQDFKLTLQQQSSLDQWASWLDSVVTQVLKQHAGSPSFPKAARQFLLKWSFYSSMVIRDLTLRSAASFGSFHLIRLLYDEYMFYLVEHRVAEATGETPIAVMGEFNDLASLSLTLLDKDDMGDERRGSEAGPDAHSLGEPLVKRERSDPNHSLQGI.

The segment at 1-46 is disordered; that stretch reads MQNSEGGADSPASVALRPSAAAPPVPASPQRVLVQAASSAPKGAQM. The segment covering 10–20 has biased composition (low complexity); that stretch reads SPASVALRPSA. Phosphoserine is present on Ser28. A DNA-binding region (RFX-type winged-helix) is located at residues 199–274; it reads HLQWLLDNYE…YHYYGIRLKP (76 aa). Residues 292-332 form a disordered region; the sequence is QQPMHQKPRYRPAQKTDSLGDSGSHSSLHSTPEQTMAAQSQ. Residues 307–322 are compositionally biased toward low complexity; sequence TDSLGDSGSHSSLHST. Residues 323–332 are compositionally biased toward polar residues; the sequence is PEQTMAAQSQ. Ser416 bears the Phosphoserine mark. The tract at residues 689–723 is disordered; it reads GDERRGSEAGPDAHSLGEPLVKRERSDPNHSLQGI.

It belongs to the RFX family. In terms of assembly, homodimer; probably only forms homodimers in testis. Heterodimer; heterodimerizes with RFX1 and RFX3.

The protein resides in the nucleus. Its subcellular location is the cytoplasm. Transcription factor that acts as a key regulator of spermatogenesis. Acts by regulating expression of genes required for the haploid phase during spermiogenesis, such as genes required for cilium assembly and function. Recognizes and binds the X-box, a regulatory motif with DNA sequence 5'-GTNRCC(0-3N)RGYAAC-3' present on promoters. Probably activates transcription of the testis-specific histone gene H1-6. In Macaca fascicularis (Crab-eating macaque), this protein is DNA-binding protein RFX2 (RFX2).